We begin with the raw amino-acid sequence, 275 residues long: Penicillin-insensitive murein endopeptidase (275 aa).

Residues 1–19 (MKKWIAGLLALIAISPVMA) form the signal peptide. Cystine bridges form between Cys44–Cys264, Cys187–Cys235, and Cys216–Cys223. Residues His110, His113, Asp120, Asp147, and His211 each coordinate Zn(2+). The interval 234-262 (GCGAELESWFQPHQPSAKPGKTLPPPLPP) is disordered.

Belongs to the peptidase M74 family. In terms of assembly, dimer. It depends on Zn(2+) as a cofactor.

It localises to the periplasm. Murein endopeptidase that cleaves the D-alanyl-meso-2,6-diamino-pimelyl amide bond that connects peptidoglycan strands. Likely plays a role in the removal of murein from the sacculus. In Yersinia enterocolitica serotype O:8 / biotype 1B (strain NCTC 13174 / 8081), this protein is Penicillin-insensitive murein endopeptidase.